Reading from the N-terminus, the 141-residue chain is ATP synthase epsilon chain (141 aa).

It belongs to the ATPase epsilon chain family. In terms of assembly, F-type ATPases have 2 components, CF(1) - the catalytic core - and CF(0) - the membrane proton channel. CF(1) has five subunits: alpha(3), beta(3), gamma(1), delta(1), epsilon(1). CF(0) has three main subunits: a, b and c.

The protein resides in the cell membrane. Functionally, produces ATP from ADP in the presence of a proton gradient across the membrane. In Mycoplasmopsis pulmonis (strain UAB CTIP) (Mycoplasma pulmonis), this protein is ATP synthase epsilon chain (atpC).